We begin with the raw amino-acid sequence, 121 residues long: Small ribosomal subunit protein uS13 (121 aa).

The disordered stretch occupies residues 92-121 (HRMGLPCRGQKTKTNARTRKGPRRGAARRK). The span at 101–121 (QKTKTNARTRKGPRRGAARRK) shows a compositional bias: basic residues.

It belongs to the universal ribosomal protein uS13 family. Part of the 30S ribosomal subunit. Forms a loose heterodimer with protein S19. Forms two bridges to the 50S subunit in the 70S ribosome.

Functionally, located at the top of the head of the 30S subunit, it contacts several helices of the 16S rRNA. In the 70S ribosome it contacts the 23S rRNA (bridge B1a) and protein L5 of the 50S subunit (bridge B1b), connecting the 2 subunits; these bridges are implicated in subunit movement. Contacts the tRNAs in the A and P-sites. This chain is Small ribosomal subunit protein uS13, found in Desulfotalea psychrophila (strain LSv54 / DSM 12343).